A 394-amino-acid chain; its full sequence is Elongation factor Tu 2 (394 aa).

In terms of domain architecture, tr-type G spans 10-204; sequence KPHVNVGTIG…FLDSYIPEPE (195 aa). A G1 region spans residues 19 to 26; that stretch reads GHVDHGKT. 19–26 lines the GTP pocket; the sequence is GHVDHGKT. Residue T26 coordinates Mg(2+). The G2 stretch occupies residues 60–64; sequence GITIN. A G3 region spans residues 81-84; sequence DCPG. GTP contacts are provided by residues 81–85 and 136–139; these read DCPGH and NKCD. The tract at residues 136–139 is G4; it reads NKCD. The G5 stretch occupies residues 174-176; sequence SAL.

The protein belongs to the TRAFAC class translation factor GTPase superfamily. Classic translation factor GTPase family. EF-Tu/EF-1A subfamily. In terms of assembly, monomer.

The protein resides in the cytoplasm. The enzyme catalyses GTP + H2O = GDP + phosphate + H(+). GTP hydrolase that promotes the GTP-dependent binding of aminoacyl-tRNA to the A-site of ribosomes during protein biosynthesis. This chain is Elongation factor Tu 2, found in Escherichia coli O139:H28 (strain E24377A / ETEC).